Here is a 363-residue protein sequence, read N- to C-terminus: Putative glutamate--cysteine ligase 2 (363 aa).

Belongs to the glutamate--cysteine ligase type 2 family. YbdK subfamily.

It carries out the reaction L-cysteine + L-glutamate + ATP = gamma-L-glutamyl-L-cysteine + ADP + phosphate + H(+). Its function is as follows. ATP-dependent carboxylate-amine ligase which exhibits weak glutamate--cysteine ligase activity. This is Putative glutamate--cysteine ligase 2 from Streptomyces coelicolor (strain ATCC BAA-471 / A3(2) / M145).